An 84-amino-acid polypeptide reads, in one-letter code: Small ribosomal subunit protein uS17 (84 aa).

The protein belongs to the universal ribosomal protein uS17 family. Part of the 30S ribosomal subunit.

Functionally, one of the primary rRNA binding proteins, it binds specifically to the 5'-end of 16S ribosomal RNA. In Karelsulcia muelleri (strain GWSS) (Sulcia muelleri), this protein is Small ribosomal subunit protein uS17.